Here is a 277-residue protein sequence, read N- to C-terminus: Formamidopyrimidine-DNA glycosylase (277 aa).

Pro-2 (schiff-base intermediate with DNA) is an active-site residue. The Proton donor role is filled by Glu-3. Catalysis depends on Lys-58, which acts as the Proton donor; for beta-elimination activity. DNA contacts are provided by His-95, Arg-113, and Arg-158. The FPG-type zinc finger occupies 243–277 (GVYDRANQPCLRCGGVVRQIRQAGRSTYYCTGCQH). Residue Arg-267 is the Proton donor; for delta-elimination activity of the active site.

This sequence belongs to the FPG family. In terms of assembly, monomer. Requires Zn(2+) as cofactor.

It carries out the reaction Hydrolysis of DNA containing ring-opened 7-methylguanine residues, releasing 2,6-diamino-4-hydroxy-5-(N-methyl)formamidopyrimidine.. It catalyses the reaction 2'-deoxyribonucleotide-(2'-deoxyribose 5'-phosphate)-2'-deoxyribonucleotide-DNA = a 3'-end 2'-deoxyribonucleotide-(2,3-dehydro-2,3-deoxyribose 5'-phosphate)-DNA + a 5'-end 5'-phospho-2'-deoxyribonucleoside-DNA + H(+). In terms of biological role, involved in base excision repair of DNA damaged by oxidation or by mutagenic agents. Acts as a DNA glycosylase that recognizes and removes damaged bases. Has a preference for oxidized purines, such as 7,8-dihydro-8-oxoguanine (8-oxoG). Has AP (apurinic/apyrimidinic) lyase activity and introduces nicks in the DNA strand. Cleaves the DNA backbone by beta-delta elimination to generate a single-strand break at the site of the removed base with both 3'- and 5'-phosphates. The protein is Formamidopyrimidine-DNA glycosylase of Dechloromonas aromatica (strain RCB).